A 312-amino-acid polypeptide reads, in one-letter code: Glycine--tRNA ligase alpha subunit (312 aa).

It belongs to the class-II aminoacyl-tRNA synthetase family. Tetramer of two alpha and two beta subunits.

The protein resides in the cytoplasm. The catalysed reaction is tRNA(Gly) + glycine + ATP = glycyl-tRNA(Gly) + AMP + diphosphate. The chain is Glycine--tRNA ligase alpha subunit from Thiobacillus denitrificans (strain ATCC 25259 / T1).